The chain runs to 182 residues: ATP synthase subunit delta (182 aa).

The protein belongs to the ATPase delta chain family. F-type ATPases have 2 components, F(1) - the catalytic core - and F(0) - the membrane proton channel. F(1) has five subunits: alpha(3), beta(3), gamma(1), delta(1), epsilon(1). CF(0) has four main subunits: a(1), b(1), b'(1) and c(10-14). The alpha and beta chains form an alternating ring which encloses part of the gamma chain. F(1) is attached to F(0) by a central stalk formed by the gamma and epsilon chains, while a peripheral stalk is formed by the delta, b and b' chains.

Its subcellular location is the cellular thylakoid membrane. Functionally, f(1)F(0) ATP synthase produces ATP from ADP in the presence of a proton or sodium gradient. F-type ATPases consist of two structural domains, F(1) containing the extramembraneous catalytic core and F(0) containing the membrane proton channel, linked together by a central stalk and a peripheral stalk. During catalysis, ATP synthesis in the catalytic domain of F(1) is coupled via a rotary mechanism of the central stalk subunits to proton translocation. This protein is part of the stalk that links CF(0) to CF(1). It either transmits conformational changes from CF(0) to CF(1) or is implicated in proton conduction. The protein is ATP synthase subunit delta of Parasynechococcus marenigrum (strain WH8102).